The primary structure comprises 538 residues: MLIKDIILTPMSLSAVAGLLPLLFVAFLVLHEPIWLLWYRYAARRHKCSMPRFIEKSFPLGIQRTMDMIKTAKSYTLLEVQYDRVFNKFKARTYLRQAPLQYQIFTIEPENIKTILATKFNDFGLGARFHTVGKVFGQGIFTLSGNGWKQSRSMLRPQFTKDQVCRIDQISSHAAELIKEMNRAMKVDQFIDVQHYFHKLTLDTATEFLFGESCESLNPENQSCIVARDGSEITAEQFVESYNFLLNYAFKRTLSSKVYWLFNSKEFRDHKKRAQSYIDYYVDKALYATSFAAENSIAEKDAAAESSGIYVFSLEMAKVTRDPVTIRDQIFNILIAGRDTTAATLSFAIHFLARNPDVFNKLREEVLDHFGTKEEQRPLSFELLKQAPYLKQVINEVLRLAPVLPLNFRTAVRDTTLPIGGGPEQKDPIFVPKGTAVYYSIYMVHRDIKYWGPDAHEFNPNRWENLKLDNVWAFLPFNGGPRICLGQQFALTELSLTLVRLLQEYSKIEMGPDFPESPRFSTTLTAQHAPPGVVVRFS.

A helical membrane pass occupies residues 18–38 (GLLPLLFVAFLVLHEPIWLLW). C484 contributes to the heme binding site.

It belongs to the cytochrome P450 family. Requires heme as cofactor.

It localises to the membrane. It carries out the reaction an omega-methyl-long-chain fatty acid + reduced [NADPH--hemoprotein reductase] + O2 = an omega-hydroxy-long-chain fatty acid + oxidized [NADPH--hemoprotein reductase] + H2O + H(+). The enzyme catalyses an (omega-1)-ethyl fatty acid + reduced [NADPH--hemoprotein reductase] + O2 = an (omega-1)-hydroxy-long-chain fatty acid + oxidized [NADPH--hemoprotein reductase] + H2O + H(+). The catalysed reaction is (9Z)-octadecenoate + reduced [NADPH--hemoprotein reductase] + O2 = 18-hydroxy-(9Z)-octadecenoate + oxidized [NADPH--hemoprotein reductase] + H2O + H(+). It catalyses the reaction (9Z)-octadecenoate + reduced [NADPH--hemoprotein reductase] + O2 = 17-hydroxy-(9Z)-octadecenoate + oxidized [NADPH--hemoprotein reductase] + H2O + H(+). It carries out the reaction (9Z,12Z)-octadecadienoate + reduced [NADPH--hemoprotein reductase] + O2 = 18-hydroxy-(9Z,12Z)-octadecadienoate + oxidized [NADPH--hemoprotein reductase] + H2O + H(+). The enzyme catalyses (9Z,12Z)-octadecadienoate + reduced [NADPH--hemoprotein reductase] + O2 = 17-hydroxy-(9Z,12Z)-octadecadienoate + oxidized [NADPH--hemoprotein reductase] + H2O + H(+). The catalysed reaction is hexadecanoate + reduced [NADPH--hemoprotein reductase] + O2 = 16-hydroxyhexadecanoate + oxidized [NADPH--hemoprotein reductase] + H2O + H(+). It catalyses the reaction (9Z)-hexadecenoate + reduced [NADPH--hemoprotein reductase] + O2 = (9Z)-16-hydroxyhexadec-9-enoate + oxidized [NADPH--hemoprotein reductase] + H2O + H(+). It carries out the reaction octadecanoate + reduced [NADPH--hemoprotein reductase] + O2 = 18-hydroxyoctadecanoate + oxidized [NADPH--hemoprotein reductase] + H2O + H(+). Catalyzes the first step of sophorolipid biosynthesis. Catalyzes the terminal (at the omega-position) or subterminal (at the omega(-1)-position) hydroxylation of a fatty acid. This converts the fatty acid to a substrate for the subsequent glycosyltransferase reactions. Oleic acid is the preferred substrate, but it acts on various other C-16, C-18 and C-20 saturated and unsaturated fatty acids, namely palmitic, palmitoleic, stearic, linoleic, cis-9,10-epoxystearic, trans-9,10-epoxystearic and arachidonic acid. In Starmerella bombicola (Yeast), this protein is Cytochrome P450 52-M1.